A 111-amino-acid polypeptide reads, in one-letter code: Integration host factor subunit alpha (111 aa).

It belongs to the bacterial histone-like protein family. Heterodimer of an alpha and a beta chain.

Its function is as follows. This protein is one of the two subunits of integration host factor, a specific DNA-binding protein that functions in genetic recombination as well as in transcriptional and translational control. This is Integration host factor subunit alpha from Polaromonas sp. (strain JS666 / ATCC BAA-500).